The sequence spans 330 residues: Aspartate--ammonia ligase (330 aa).

Belongs to the class-II aminoacyl-tRNA synthetase family. AsnA subfamily.

The protein resides in the cytoplasm. The catalysed reaction is L-aspartate + NH4(+) + ATP = L-asparagine + AMP + diphosphate + H(+). It functions in the pathway amino-acid biosynthesis; L-asparagine biosynthesis; L-asparagine from L-aspartate (ammonia route): step 1/1. The polypeptide is Aspartate--ammonia ligase (Shigella dysenteriae serotype 1 (strain Sd197)).